Here is a 926-residue protein sequence, read N- to C-terminus: Lipoxygenase 4, chloroplastic (926 aa).

The N-terminal 58 residues, 1–58, are a transit peptide targeting the chloroplast; that stretch reads MALANEIMGSRLIFERSSSLASPFHSRFSIKKKTQRTQFSINPFDPRPMRAVNSSGVV. One can recognise a PLAT domain in the interval 106-228; it reads FKETLVKHLD…DHPSKRILFT (123 aa). The Lipoxygenase domain occupies 231–926; the sequence is PYLPSETPSG…CRGVPNSVSI (696 aa). The Fe cation site is built by H585, H590, H777, N781, and I926.

This sequence belongs to the lipoxygenase family. The cofactor is Fe cation. As to expression, expressed in leaves.

It localises to the plastid. The protein localises to the chloroplast. It catalyses the reaction (9Z,12Z)-octadecadienoate + O2 = (13S)-hydroperoxy-(9Z,11E)-octadecadienoate. The catalysed reaction is (9Z,12Z,15Z)-octadecatrienoate + O2 = (13S)-hydroperoxy-(9Z,11E,15Z)-octadecatrienoate. The protein operates within lipid metabolism; oxylipin biosynthesis. Its function is as follows. Plant lipoxygenases may be involved in a number of diverse aspects of plant physiology including growth and development, pest resistance, and senescence or responses to wounding. Catalyzes the hydroperoxidation of lipids containing a cis,cis-1,4-pentadiene structure. 13S-lipoxygenase that can use linolenic acid as substrates. The sequence is that of Lipoxygenase 4, chloroplastic (LOX4) from Arabidopsis thaliana (Mouse-ear cress).